A 382-amino-acid chain; its full sequence is Ribosomal RNA large subunit methyltransferase G (382 aa).

Belongs to the methyltransferase superfamily. RlmG family.

The protein localises to the cytoplasm. It catalyses the reaction guanosine(1835) in 23S rRNA + S-adenosyl-L-methionine = N(2)-methylguanosine(1835) in 23S rRNA + S-adenosyl-L-homocysteine + H(+). Specifically methylates the guanine in position 1835 (m2G1835) of 23S rRNA. The chain is Ribosomal RNA large subunit methyltransferase G from Pseudoalteromonas translucida (strain TAC 125).